A 59-amino-acid chain; its full sequence is UPF0434 protein Ping_0902 (59 aa).

This sequence belongs to the UPF0434 family.

The chain is UPF0434 protein Ping_0902 from Psychromonas ingrahamii (strain DSM 17664 / CCUG 51855 / 37).